The sequence spans 1516 residues: Myosin-14 (1516 aa).

The 50-residue stretch at 7–56 (NVGSCVWVEDPEVAWIDGEVIEVKGSDIKVKCTSGKTVAIKVSSAYPKDV) folds into the Myosin N-terminal SH3-like domain. Residues 61-738 (SGVDDMTRLA…QMADLDARRN (678 aa)) enclose the Myosin motor domain. Residues 155 to 162 (GESGAGKT) and 208 to 216 (NNNSSRFGK) contribute to the ATP site. Actin-binding regions lie at residues 494–528 (LIEK…YQTF), 530–553 (DHKH…AGDV), 588–612 (FPLL…KQQL), and 612–634 (LVTL…KPNN). 6 IQ domains span residues 741 to 770 (LGRA…VATN), 764 to 793 (LRKV…DAAV), 789 to 818 (RDAA…AAVS), 812 to 841 (LYFA…DKAA), 837 to 866 (QDKA…AAIT), and 860 to 889 (LKKA…AAKE). A coiled-coil region spans residues 890–1056 (TGVLEAAKSK…ENKILRQKSL (167 aa)). The disordered stretch occupies residues 1061 to 1085 (GHLPPTPVKGSQNGHFSSKESPFNG). A compositionally biased stretch (polar residues) spans 1069-1084 (KGSQNGHFSSKESPFN). The Dilute domain occupies 1158–1463 (DRLVQMIGSA…IANMRVLMTE (306 aa)).

Belongs to the TRAFAC class myosin-kinesin ATPase superfamily. Myosin family. Plant myosin class XI subfamily. Homodimer.

Its function is as follows. Myosin heavy chain that is required for the cell cycle-regulated transport of various organelles and proteins for their segregation. Functions by binding with its tail domain to receptor proteins on organelles and exerting force with its N-terminal motor domain against actin filaments, thereby transporting its cargo along polarized actin cables. The polypeptide is Myosin-14 (XI-H) (Arabidopsis thaliana (Mouse-ear cress)).